A 117-amino-acid polypeptide reads, in one-letter code: Hydrogenase maturation factor HypA (117 aa).

A Ni(2+)-binding site is contributed by histidine 2. Residues cysteine 74, cysteine 77, cysteine 91, and cysteine 94 each coordinate Zn(2+).

The protein belongs to the HypA/HybF family.

Functionally, involved in the maturation of [NiFe] hydrogenases. Required for nickel insertion into the metal center of the hydrogenase. The chain is Hydrogenase maturation factor HypA from Helicobacter pylori (strain J99 / ATCC 700824) (Campylobacter pylori J99).